The primary structure comprises 355 residues: Chorismate synthase (355 aa).

Arginine 48 contacts NADP(+). Residues 126 to 128, glycine 278, 293 to 297, and arginine 319 contribute to the FMN site; these read RSS and KPIPS.

Belongs to the chorismate synthase family. Homotetramer. It depends on FMNH2 as a cofactor.

The catalysed reaction is 5-O-(1-carboxyvinyl)-3-phosphoshikimate = chorismate + phosphate. It functions in the pathway metabolic intermediate biosynthesis; chorismate biosynthesis; chorismate from D-erythrose 4-phosphate and phosphoenolpyruvate: step 7/7. Its function is as follows. Catalyzes the anti-1,4-elimination of the C-3 phosphate and the C-6 proR hydrogen from 5-enolpyruvylshikimate-3-phosphate (EPSP) to yield chorismate, which is the branch point compound that serves as the starting substrate for the three terminal pathways of aromatic amino acid biosynthesis. This reaction introduces a second double bond into the aromatic ring system. The chain is Chorismate synthase from Oleidesulfovibrio alaskensis (strain ATCC BAA-1058 / DSM 17464 / G20) (Desulfovibrio alaskensis).